A 393-amino-acid chain; its full sequence is Na(+)/H(+) antiporter NhaA (393 aa).

12 helical membrane-spanning segments follow: residues Ala-23 to Phe-43, Leu-58 to Leu-78, Met-96 to Leu-116, Gly-126 to Gly-146, Val-155 to Phe-175, Ala-178 to Met-198, Met-201 to Phe-221, Gly-224 to Pro-244, Val-265 to Leu-285, Ile-298 to Ile-318, Leu-334 to Leu-354, and Ile-367 to Ala-387.

Belongs to the NhaA Na(+)/H(+) (TC 2.A.33) antiporter family.

Its subcellular location is the cell inner membrane. The catalysed reaction is Na(+)(in) + 2 H(+)(out) = Na(+)(out) + 2 H(+)(in). Na(+)/H(+) antiporter that extrudes sodium in exchange for external protons. This Brucella suis (strain ATCC 23445 / NCTC 10510) protein is Na(+)/H(+) antiporter NhaA.